Here is an 882-residue protein sequence, read N- to C-terminus: Alanine--tRNA ligase (882 aa).

Zn(2+) is bound by residues H568, H572, C670, and H674.

It belongs to the class-II aminoacyl-tRNA synthetase family. The cofactor is Zn(2+).

Its subcellular location is the cytoplasm. The enzyme catalyses tRNA(Ala) + L-alanine + ATP = L-alanyl-tRNA(Ala) + AMP + diphosphate. Its function is as follows. Catalyzes the attachment of alanine to tRNA(Ala) in a two-step reaction: alanine is first activated by ATP to form Ala-AMP and then transferred to the acceptor end of tRNA(Ala). Also edits incorrectly charged Ser-tRNA(Ala) and Gly-tRNA(Ala) via its editing domain. The polypeptide is Alanine--tRNA ligase (Syntrophotalea carbinolica (strain DSM 2380 / NBRC 103641 / GraBd1) (Pelobacter carbinolicus)).